The primary structure comprises 260 residues: Putative imidazole glycerol phosphate synthase subunit hisF3 (260 aa).

The active site involves Asp135.

Belongs to the HisA/HisF family. In terms of assembly, heterodimer of HisH and HisF.

The protein resides in the cytoplasm. It carries out the reaction 5-[(5-phospho-1-deoxy-D-ribulos-1-ylimino)methylamino]-1-(5-phospho-beta-D-ribosyl)imidazole-4-carboxamide + L-glutamine = D-erythro-1-(imidazol-4-yl)glycerol 3-phosphate + 5-amino-1-(5-phospho-beta-D-ribosyl)imidazole-4-carboxamide + L-glutamate + H(+). It participates in amino-acid biosynthesis; L-histidine biosynthesis; L-histidine from 5-phospho-alpha-D-ribose 1-diphosphate: step 5/9. Functionally, IGPS catalyzes the conversion of PRFAR and glutamine to IGP, AICAR and glutamate. The HisF subunit catalyzes the cyclization activity that produces IGP and AICAR from PRFAR using the ammonia provided by the HisH subunit. The polypeptide is Putative imidazole glycerol phosphate synthase subunit hisF3 (hisF3) (Vibrio vulnificus (strain YJ016)).